The sequence spans 982 residues: Mitochondrial DNA mismatch repair protein mutS homolog (982 aa).

An ATP-binding site is contributed by 698 to 705 (SVNGAGKS). The 47-residue stretch at 905–951 (CEICGAPADAVHHIKPKSEHKKLCNRKLNRRSNLVPVCSSCHLDIHR) folds into the HNH domain.

The protein belongs to the DNA mismatch repair MutS family.

It is found in the mitochondrion. Functionally, may be involved in DNA-mismatch repair. The chain is Mitochondrial DNA mismatch repair protein mutS homolog from Sarcophyton glaucum (Toadstool umbrella leather coral).